The chain runs to 753 residues: Bifunctional terpene synthase FUP1 (753 aa).

Positions 1–329 (MGPLLYRSRH…CSACPRQNAW (329 aa)) are terpene cyclase. Aspartate 96 contributes to the Mg(2+) binding site. The DDXXD 1 signature appears at 96–100 (DDTGE). Positions 231–239 (NDYFSWERE) match the NSE/DTE motif. A prenyltransferase region spans residues 330–745 (KNDTLSNGQN…MLRLCLAKLS (416 aa)). Isopentenyl diphosphate-binding residues include lysine 461, arginine 464, and histidine 493. Mg(2+)-binding residues include aspartate 500 and aspartate 504. Residues 500–504 (DDLED) carry the DDXXD 2 motif. Arginine 509 contacts dimethylallyl diphosphate. Arginine 510 serves as a coordination point for isopentenyl diphosphate. Residues lysine 587, threonine 588, glutamine 625, asparagine 632, lysine 640, and lysine 650 each contribute to the dimethylallyl diphosphate site.

This sequence in the N-terminal section; belongs to the terpene synthase family. It in the C-terminal section; belongs to the FPP/GGPP synthase family. Hexamer. Mg(2+) is required as a cofactor.

The enzyme catalyses isopentenyl diphosphate + (2E,6E)-farnesyl diphosphate = (2E,6E,10E)-geranylgeranyl diphosphate + diphosphate. The protein operates within secondary metabolite biosynthesis; terpenoid biosynthesis. Its function is as follows. Bifunctional terpene synthase; part of the gene cluster that mediates the biosynthesis of the mycotoxin fusaproliferin (FUP) that belongs to the class of bicyclic sesterterpenoids. The FUP biosynthetic pathway starts with the enzyme encoded by FUP1 that combines a C-terminal prenyltransferase domain responsible for the synthesis of geranylgeranyl diphosphate with the N-terminal terpene cyclase domain, to yield preterpestacin I. Preterpestacin I is then decorated by oxygenation steps that are catalyzed by two cytochrome P450 monooxygenases. First, FUP2 introduces a hydroxyl group at the C-24 position resulting in the formation of preterpestacin IIa, which can be further oxidized. The second P450 monooxygenase catalyzes the hydroxylation at C-16 and C-17 of preterpestacin IIa, producing preterpestacin III. Subsequently, the FAD-dependent oxidoreductase FUP4 catalyzes the oxidation of the hydroxy group at the C-16 position to a keto group, leading to the formation of (-)-terpestacin, which is the immediate precursor of FUP. The final step in the proposed biosynthetic pathway is the addition of an acetyl group at the C-24 position of terpestacin, which is catalyzed by the acetyltransferase FUP5. This is Bifunctional terpene synthase FUP1 from Fusarium proliferatum (strain ET1) (Orchid endophyte fungus).